The following is a 298-amino-acid chain: 4-diphosphocytidyl-2-C-methyl-D-erythritol kinase (298 aa).

The active site involves Lys15. An ATP-binding site is contributed by 100 to 110 (PIAAGIGGGSA). Asp142 is an active-site residue.

It belongs to the GHMP kinase family. IspE subfamily.

It catalyses the reaction 4-CDP-2-C-methyl-D-erythritol + ATP = 4-CDP-2-C-methyl-D-erythritol 2-phosphate + ADP + H(+). The protein operates within isoprenoid biosynthesis; isopentenyl diphosphate biosynthesis via DXP pathway; isopentenyl diphosphate from 1-deoxy-D-xylulose 5-phosphate: step 3/6. Its function is as follows. Catalyzes the phosphorylation of the position 2 hydroxy group of 4-diphosphocytidyl-2C-methyl-D-erythritol. The chain is 4-diphosphocytidyl-2-C-methyl-D-erythritol kinase from Rhodopseudomonas palustris (strain BisA53).